The following is a 216-amino-acid chain: Large ribosomal subunit protein uL3 (216 aa).

The segment at 137 to 158 is disordered; it reads GASHGAHKNHRKPGSIGGASTP.

The protein belongs to the universal ribosomal protein uL3 family. In terms of assembly, part of the 50S ribosomal subunit. Forms a cluster with proteins L14 and L19.

In terms of biological role, one of the primary rRNA binding proteins, it binds directly near the 3'-end of the 23S rRNA, where it nucleates assembly of the 50S subunit. This Arthrobacter sp. (strain FB24) protein is Large ribosomal subunit protein uL3.